A 366-amino-acid polypeptide reads, in one-letter code: tRNA/tmRNA (uracil-C(5))-methyltransferase (366 aa).

S-adenosyl-L-methionine-binding residues include glutamine 190, tyrosine 218, asparagine 223, glutamate 239, and aspartate 299. Cysteine 324 serves as the catalytic Nucleophile. Glutamate 358 acts as the Proton acceptor in catalysis.

This sequence belongs to the class I-like SAM-binding methyltransferase superfamily. RNA M5U methyltransferase family. TrmA subfamily.

The enzyme catalyses uridine(54) in tRNA + S-adenosyl-L-methionine = 5-methyluridine(54) in tRNA + S-adenosyl-L-homocysteine + H(+). The catalysed reaction is uridine(341) in tmRNA + S-adenosyl-L-methionine = 5-methyluridine(341) in tmRNA + S-adenosyl-L-homocysteine + H(+). Functionally, dual-specificity methyltransferase that catalyzes the formation of 5-methyluridine at position 54 (m5U54) in all tRNAs, and that of position 341 (m5U341) in tmRNA (transfer-mRNA). The protein is tRNA/tmRNA (uracil-C(5))-methyltransferase of Klebsiella pneumoniae (strain 342).